Consider the following 543-residue polypeptide: MFS-type transporter pyvG (543 aa).

The tract at residues 24 to 71 is disordered; sequence PPTEQQPGFQLPPPYRLAATRTQPQQQQEQEQEQEQAKPATRPPWNEP. A glycan (N-linked (GlcNAc...) asparagine) is linked at N94. A run of 12 helical transmembrane segments spans residues 101-121, 141-161, 178-198, 203-223, 230-250, 259-279, 335-355, 374-394, 415-435, 440-460, 476-496, and 512-532; these read LLVYLEVNLITFMVYMSVAIF, LGMSLYVLGYGTGPMIWSPLS, IFLLLSIPTAVVNNVPGFLIL, GFFGSPGLATGGASIADVTGL, LYVWAVCSIAGPAVAPVIAGF, WSMWEVLWAAGGCFVFLLFLP, PAILFTTVYIGLVYAIFYSYF, GLIFLGAIVGTLLVLPGYFAF, LVPALCGSVLVPVGLFLFAWT, LHWVVPTVGLVLEVAGMSLVI, ASLFAINDLARAYLAFAAIMW, and LLAGLTVGCVGGMFTLYWWGP.

The protein belongs to the major facilitator superfamily. CAR1 family.

It is found in the cell membrane. MFS-type transporter; part of the gene cluster that mediates the biosynthesis of pyranoviolin A, a pyranonigrin analog with a C-3 methoxy group. May be involved in the secretion of pyranoviolin A. In Aspergillus violaceofuscus (strain CBS 115571), this protein is MFS-type transporter pyvG.